Consider the following 87-residue polypeptide: UPF0250 protein BUsg_472 (87 aa).

This sequence belongs to the UPF0250 family.

This Buchnera aphidicola subsp. Schizaphis graminum (strain Sg) protein is UPF0250 protein BUsg_472.